The following is a 218-amino-acid chain: Deoxyribose-phosphate aldolase (218 aa).

Catalysis depends on D89, which acts as the Proton donor/acceptor. K152 acts as the Schiff-base intermediate with acetaldehyde in catalysis. Residue K182 is the Proton donor/acceptor of the active site.

This sequence belongs to the DeoC/FbaB aldolase family. DeoC type 1 subfamily.

It is found in the cytoplasm. It catalyses the reaction 2-deoxy-D-ribose 5-phosphate = D-glyceraldehyde 3-phosphate + acetaldehyde. It participates in carbohydrate degradation; 2-deoxy-D-ribose 1-phosphate degradation; D-glyceraldehyde 3-phosphate and acetaldehyde from 2-deoxy-alpha-D-ribose 1-phosphate: step 2/2. Its function is as follows. Catalyzes a reversible aldol reaction between acetaldehyde and D-glyceraldehyde 3-phosphate to generate 2-deoxy-D-ribose 5-phosphate. In Kocuria rhizophila (strain ATCC 9341 / DSM 348 / NBRC 103217 / DC2201), this protein is Deoxyribose-phosphate aldolase.